Reading from the N-terminus, the 283-residue chain is D-alanine aminotransferase (283 aa).

Substrate is bound at residue Y31. Position 50 (R50) interacts with pyridoxal 5'-phosphate. Substrate contacts are provided by R98 and H100. K144 functions as the Proton acceptor in the catalytic mechanism. The residue at position 144 (K144) is an N6-(pyridoxal phosphate)lysine. Residue E176 participates in pyridoxal 5'-phosphate binding.

Belongs to the class-IV pyridoxal-phosphate-dependent aminotransferase family. In terms of assembly, homodimer. Requires pyridoxal 5'-phosphate as cofactor.

It catalyses the reaction D-alanine + 2-oxoglutarate = D-glutamate + pyruvate. In terms of biological role, acts on the D-isomers of alanine, leucine, aspartate, glutamate, aminobutyrate, norvaline and asparagine. The enzyme transfers an amino group from a substrate D-amino acid to the pyridoxal phosphate cofactor to form pyridoxamine and an alpha-keto acid in the first half-reaction. The second half-reaction is the reverse of the first, transferring the amino group from the pyridoxamine to a second alpha-keto acid to form the product D-amino acid via a ping-pong mechanism. This is an important process in the formation of D-alanine and D-glutamate, which are essential bacterial cell wall components. This Bacillus licheniformis protein is D-alanine aminotransferase (dat).